A 326-amino-acid polypeptide reads, in one-letter code: Macrosialin (326 aa).

A signal peptide spans 1 to 20 (MRLPVCLILLGPLIAQGTEE). Residues 21 to 109 (DCPHKKAVTL…ATSPRSSTVG (89 aa)) are mucin-like. Topologically, residues 21–291 (DCPHKKAVTL…PCFSCNRDQS (271 aa)) are extracellular. The span at 38–58 (PTATESTASPTTSHRPTTTSH) shows a compositional bias: low complexity. The segment at 38–129 (PTATESTASP…SPRSKGALGN (92 aa)) is disordered. 4 tandem repeats follow at residues 44-49 (TASPTT), 50-64 (SHRP…VTVH), 65-72 (TSSGPTTV), and 73-88 (THNP…ATIS). Positions 59–69 (GNVTVHTSSGP) are enriched in polar residues. N-linked (GlcNAc...) asparagine glycosylation occurs at Asn-60. The segment covering 70-80 (TTVTHNPATTT) has biased composition (low complexity). Residues 81 to 108 (SHGNATISHATVSPTTNGTATSPRSSTV) are compositionally biased toward polar residues. 2 N-linked (GlcNAc...) asparagine glycosylation sites follow: Asn-84 and Asn-97. Residues 111 to 120 (HPGPPPPSPS) show a composition bias toward pro residues. Residues Asn-129, Asn-134, Asn-169, Asn-218, Asn-233, and Asn-251 are each glycosylated (N-linked (GlcNAc...) asparagine). A disulfide bridge connects residues Cys-139 and Cys-177. Cys-249 and Cys-286 form a disulfide bridge. The helical transmembrane segment at 292–316 (LLLPLIIGLVLLGLLTLVLIAFCIT) threads the bilayer. At 317-326 (RRRQSTYQPL) the chain is on the cytoplasmic side.

The protein belongs to the LAMP family. In terms of processing, N- and O-glycosylated. In terms of tissue distribution, expressed in tissue macrophages and to a lesser extent in dendritic cells.

It localises to the endosome membrane. Its subcellular location is the lysosome membrane. The protein localises to the cell membrane. In terms of biological role, could play a role in phagocytic activities of tissue macrophages, both in intracellular lysosomal metabolism and extracellular cell-cell and cell-pathogen interactions. Binds to tissue- and organ-specific lectins or selectins, allowing homing of macrophage subsets to particular sites. Rapid recirculation of CD68 from endosomes and lysosomes to the plasma membrane may allow macrophages to crawl over selectin-bearing substrates or other cells. This chain is Macrosialin (Cd68), found in Mus musculus (Mouse).